Here is a 403-residue protein sequence, read N- to C-terminus: D-mannonate dehydratase (403 aa).

Residues Asn38 and His123 each contribute to the substrate site. Residue Tyr160 is the Proton donor/acceptor of the active site. A Mg(2+)-binding site is contributed by Asp211. The active-site Proton donor/acceptor is His213. Glu237 and Glu263 together coordinate Mg(2+). Substrate contacts are provided by Glu263, Arg284, His313, Asp317, and Glu340.

The protein belongs to the mandelate racemase/muconate lactonizing enzyme family. GalD subfamily. It depends on Mg(2+) as a cofactor.

It carries out the reaction D-mannonate = 2-dehydro-3-deoxy-D-gluconate + H2O. It functions in the pathway carbohydrate metabolism; pentose and glucuronate interconversion. Functionally, catalyzes the dehydration of D-mannonate. Has no detectable activity with a panel of 70 other acid sugars (in vitro). The chain is D-mannonate dehydratase from Sphingomonas sp. (strain SKA58).